The primary structure comprises 350 residues: Putative F-box protein At1g23770 (350 aa).

Residues 1-15 (MDTGFADSNNDSSPG) show a composition bias toward polar residues. Residues 1–29 (MDTGFADSNNDSSPGEGSKRGNSGIEGPV) form a disordered region. Residues 206 to 252 (PPCLMLLPTELKLKILELLPGVSIGYMACVCTEMRYLASDNDLWEHK) form the F-box domain.

The sequence is that of Putative F-box protein At1g23770 from Arabidopsis thaliana (Mouse-ear cress).